Here is a 361-residue protein sequence, read N- to C-terminus: POU domain, class 3, transcription factor 4 (361 aa).

Disordered stretches follow at residues 99–131 and 144–192; these read PHVA…GQPL and MLEH…PTSD. Positions 122–131 are enriched in polar residues; sequence PSITSSGQPL. Basic and acidic residues predominate over residues 165-183; that stretch reads VLREPPDHGELGSHHCQDH. Positions 186–260 constitute a POU-specific domain; it reads EETPTSDELE…LLNKWLEEAD (75 aa). S265 carries the phosphoserine modification. Residues 278-337 constitute a DNA-binding region (homeobox); it reads KRKKRTSIEVSVKGVLETHFLKCPKPAAQEISSLADSLQLEKEVVRVWFCNRRQKEKRMT.

This sequence belongs to the POU transcription factor family. Class-3 subfamily. In terms of assembly, interacts with HNRNPU. In terms of tissue distribution, brain specific.

Its subcellular location is the nucleus. Probable transcription factor which exert its primary action widely during early neural development and in a very limited set of neurons in the mature brain. The polypeptide is POU domain, class 3, transcription factor 4 (POU3F4) (Homo sapiens (Human)).